A 174-amino-acid polypeptide reads, in one-letter code: Adipose-secreted signaling protein (174 aa).

Ala-2 is modified (N-acetylalanine). Residue Thr-147 is modified to Phosphothreonine.

It belongs to the ADISSP family.

It localises to the secreted. Adipocyte-secreted protein (adipokine) that acts as a key regulator for white adipose tissue (WAT) thermogenesis and glucose homeostasis at least in part through activation of protein kinase A (PKA). This is Adipose-secreted signaling protein from Bos taurus (Bovine).